A 175-amino-acid polypeptide reads, in one-letter code: Calcineurin subunit B (175 aa).

EF-hand domains follow at residues 21–56 (AEIERLKKRFMKLDKDSSGSIDKTEFMSIPGVSANP), 58–88 (AKRIIEVFDEDNSGDVDFQEFITSLSIFSGR), 90–125 (ETDAKLRFAFRIYDIDKDGYISNGELFIVLKIMVGT), and 131–166 (QLQQIVDRTIMENDVDGDGKLSFEEFKKAAETTEVI). Residues D34, D36, S38, S40, E45, D66, D68, S70, D72, E77, D103, D105, D107, Y109, E114, D144, D146, D148, K150, and E155 each contribute to the Ca(2+) site.

Belongs to the calcineurin regulatory subunit family. In terms of assembly, composed of a catalytic subunit (A) and a regulatory subunit (B).

Functionally, regulatory subunit of calcineurin, a calcium-dependent, calmodulin stimulated protein phosphatase. Confers calcium sensitivity. The polypeptide is Calcineurin subunit B (CNB1) (Kluyveromyces lactis (strain ATCC 8585 / CBS 2359 / DSM 70799 / NBRC 1267 / NRRL Y-1140 / WM37) (Yeast)).